A 159-amino-acid polypeptide reads, in one-letter code: Phosphopantetheine adenylyltransferase (159 aa).

T10 is a binding site for substrate. Residues 10–11 (TF) and H18 contribute to the ATP site. Substrate is bound by residues K42, L74, and R88. Residues 89-91 (GLR), E99, and 124-130 (NAFISSS) each bind ATP.

The protein belongs to the bacterial CoaD family. In terms of assembly, homohexamer. Mg(2+) is required as a cofactor.

The protein resides in the cytoplasm. It carries out the reaction (R)-4'-phosphopantetheine + ATP + H(+) = 3'-dephospho-CoA + diphosphate. The protein operates within cofactor biosynthesis; coenzyme A biosynthesis; CoA from (R)-pantothenate: step 4/5. In terms of biological role, reversibly transfers an adenylyl group from ATP to 4'-phosphopantetheine, yielding dephospho-CoA (dPCoA) and pyrophosphate. The chain is Phosphopantetheine adenylyltransferase from Campylobacter fetus subsp. fetus (strain 82-40).